The primary structure comprises 134 residues: Probable histone H2A.3 (134 aa).

Belongs to the histone H2A family. As to quaternary structure, the nucleosome is a histone octamer containing two molecules each of H2A, H2B, H3 and H4 assembled in one H3-H4 heterotetramer and two H2A-H2B heterodimers. The octamer wraps approximately 147 bp of DNA.

The protein localises to the nucleus. It localises to the chromosome. Core component of nucleosome. Nucleosomes wrap and compact DNA into chromatin, limiting DNA accessibility to the cellular machineries which require DNA as a template. Histones thereby play a central role in transcription regulation, DNA repair, DNA replication and chromosomal stability. DNA accessibility is regulated via a complex set of post-translational modifications of histones, also called histone code, and nucleosome remodeling. The sequence is that of Probable histone H2A.3 from Oryza sativa subsp. indica (Rice).